The following is a 335-amino-acid chain: Vitamin B12 import system permease protein BtuC (335 aa).

8 helical membrane passes run 25–45 (LVVMLLFALLISLCAGDVWIW), 67–87 (MAVIMVGASLAVSGAVMQALF), 94–113 (PGLLGVANGAGVALVTAVLL), 117–139 (LLPIWVLSTCAIIGALLMTSILL), 153–173 (LLVGVALGIICSAMMTWAVYF), 243–263 (VLAIGLLVGISVALAGVISFI), 281–301 (RLLAGCAFAGGGVLLLADVVA), and 309–329 (ELPIGVVTATLGSPLFIWLLI).

It belongs to the binding-protein-dependent transport system permease family. FecCD subfamily. In terms of assembly, the complex is composed of two ATP-binding proteins (BtuD), two transmembrane proteins (BtuC) and a solute-binding protein (BtuF).

The protein localises to the cell inner membrane. Part of the ABC transporter complex BtuCDF involved in vitamin B12 import. Involved in the translocation of the substrate across the membrane. The chain is Vitamin B12 import system permease protein BtuC from Yersinia pseudotuberculosis serotype O:1b (strain IP 31758).